The chain runs to 172 residues: Large ribosomal subunit protein uL10 (172 aa).

The protein belongs to the universal ribosomal protein uL10 family. Part of the ribosomal stalk of the 50S ribosomal subunit. The N-terminus interacts with L11 and the large rRNA to form the base of the stalk. The C-terminus forms an elongated spine to which L12 dimers bind in a sequential fashion forming a multimeric L10(L12)X complex.

Forms part of the ribosomal stalk, playing a central role in the interaction of the ribosome with GTP-bound translation factors. This Chlorobium phaeobacteroides (strain DSM 266 / SMG 266 / 2430) protein is Large ribosomal subunit protein uL10.